A 201-amino-acid chain; its full sequence is Natural cytotoxicity triggering receptor 3 (201 aa).

Positions 1-18 (MAWMLLLILIMVHPGSCA) are cleaved as a signal peptide. The region spanning 19 to 126 (LWVSQPPEIR…VGTGNGTRLV (108 aa)) is the Ig-like domain. Residues 19-135 (LWVSQPPEIR…VVEKEHPQLG (117 aa)) lie on the Extracellular side of the membrane. Cys39 and Cys108 are oxidised to a cystine. N-linked (GlcNAc...) asparagine glycosylation is found at Asn42 and Asn121. A helical transmembrane segment spans residues 136 to 156 (AGTVLLLRAGFYAVSFLSVAV). The Cytoplasmic segment spans residues 157-201 (GSTVYYQGKCLTWKGPRRQLPAVVPAPLPPPCGSSAQLLPPVPGG).

This sequence belongs to the natural cytotoxicity receptor (NCR) family. As to quaternary structure, homodimer in the unliganted form. Interacts with CD3Z. Interacts with and is activated by binding to NCR3LG1. Interacts with and is activated by binding to BAG6. Interacts with and is inhibited by binding to LGALS3.

Its subcellular location is the cell membrane. Its function is as follows. Cell membrane receptor of natural killer/NK cells that is activated by binding of extracellular ligands including BAG6 and NCR3LG1. Stimulates NK cells cytotoxicity toward neighboring cells producing these ligands. It controls, for instance, NK cells cytotoxicity against tumor cells. Engagement of NCR3 by BAG6 also promotes myeloid dendritic cells (DC) maturation, both through killing DCs that did not acquire a mature phenotype, and inducing the release by NK cells of TNFA and IFNG that promote DC maturation. In Pan troglodytes (Chimpanzee), this protein is Natural cytotoxicity triggering receptor 3 (NCR3).